Reading from the N-terminus, the 49-residue chain is Toxic protein HokB (49 aa).

Residues 4-24 (NPLVVCLLIICITILTFTLLT) form a helical membrane-spanning segment.

The protein belongs to the Hok/Gef family.

It localises to the cell inner membrane. In terms of biological role, toxic component of a type I toxin-antitoxin (TA) system. When overexpressed kills cells within minutes; causes collapse of the transmembrane potential and arrest of respiration. Expression leads to membrane depolarization; when protein levels are high enough depolarization probably leads to lowered metabolic activity which in turn induces some cells to enter the persistent state in which they transiently survive antibiotic exposure. Its toxic effect is probably neutralized by antisense antitoxin RNA SokB, which is encoded in trans on the opposite DNA strand. The protein is Toxic protein HokB of Escherichia coli (strain K12).